A 474-amino-acid polypeptide reads, in one-letter code: Trehalose-6-phosphate synthase (474 aa).

R10 provides a ligand contact to D-glucose 6-phosphate. 22 to 23 (GG) contacts UDP-alpha-D-glucose. D-glucose 6-phosphate contacts are provided by Y77 and D131. R263 and K268 together coordinate UDP-alpha-D-glucose. R301 contributes to the D-glucose 6-phosphate binding site. UDP-alpha-D-glucose-binding positions include F340 and 366-370 (LVAKE).

This sequence belongs to the glycosyltransferase 20 family. As to quaternary structure, homotetramer.

The catalysed reaction is D-glucose 6-phosphate + UDP-alpha-D-glucose = alpha,alpha-trehalose 6-phosphate + UDP + H(+). Its pathway is glycan biosynthesis; trehalose biosynthesis. Probably involved in the osmoprotection via the biosynthesis of trehalose. Catalyzes the transfer of glucose from UDP-alpha-D-glucose (UDP-Glc) to D-glucose 6-phosphate (Glc-6-P) to form trehalose-6-phosphate. Acts with retention of the anomeric configuration of the UDP-sugar donor. In Cronobacter sakazakii (strain ATCC BAA-894) (Enterobacter sakazakii), this protein is Trehalose-6-phosphate synthase.